We begin with the raw amino-acid sequence, 281 residues long: Large ribosomal subunit protein uL2 (281 aa).

A disordered region spans residues 220-281; it reads VRGSVMNPND…RRRDGKALSK (62 aa). Residues 258-271 show a composition bias toward basic residues; it reads KTRKKNKQSNKMIM. The span at 272–281 shows a compositional bias: basic and acidic residues; it reads RRRDGKALSK.

This sequence belongs to the universal ribosomal protein uL2 family. In terms of assembly, part of the 50S ribosomal subunit. Forms a bridge to the 30S subunit in the 70S ribosome.

Its function is as follows. One of the primary rRNA binding proteins. Required for association of the 30S and 50S subunits to form the 70S ribosome, for tRNA binding and peptide bond formation. It has been suggested to have peptidyltransferase activity; this is somewhat controversial. Makes several contacts with the 16S rRNA in the 70S ribosome. In Lachnoclostridium phytofermentans (strain ATCC 700394 / DSM 18823 / ISDg) (Clostridium phytofermentans), this protein is Large ribosomal subunit protein uL2.